The primary structure comprises 250 residues: Acetylglutamate kinase (250 aa).

Substrate contacts are provided by residues glycine 41–glycine 42, arginine 63, and asparagine 156.

This sequence belongs to the acetylglutamate kinase family. ArgB subfamily.

The protein localises to the cytoplasm. It carries out the reaction N-acetyl-L-glutamate + ATP = N-acetyl-L-glutamyl 5-phosphate + ADP. The protein operates within amino-acid biosynthesis; L-arginine biosynthesis; N(2)-acetyl-L-ornithine from L-glutamate: step 2/4. In terms of biological role, catalyzes the ATP-dependent phosphorylation of N-acetyl-L-glutamate. The sequence is that of Acetylglutamate kinase from Listeria welshimeri serovar 6b (strain ATCC 35897 / DSM 20650 / CCUG 15529 / CIP 8149 / NCTC 11857 / SLCC 5334 / V8).